Consider the following 281-residue polypeptide: MVLSEHLLVLLGAVLCAPALSDVLFRCPPCSPERLAACPGNSPRSPCAELVRAPGCGCCPVCARLEGESCGVYTARCAGGLRCYPHPGSELPLQALVLGLGTCGKRRDAEYGSSQERGTELPEDQSDNMLVDNNLVAGPAVPGDFMPRKSSKAHAVNRERANEQHRSKTNKSEDKKRPARSLCQLQLDQVLERISGMHLPDDRGPLEHLYALPIPNCDKNGFFNLKQCKMSVNGQRGECWCVNPITGKVLPGSPTVRGDPECHLFYTNPEEERRAHTQRAP.

Residues 1-21 (MVLSEHLLVLLGAVLCAPALS) form the signal peptide. An IGFBP N-terminal domain is found at 23–106 (VLFRCPPCSP…VLGLGTCGKR (84 aa)). Disulfide bonds link C27/C56, C30/C58, C38/C59, C47/C62, C70/C83, and C77/C103. Disordered regions lie at residues 107-127 (RDAE…DQSD) and 139-180 (PAVP…RPAR). The span at 156–176 (VNRERANEQHRSKTNKSEDKK) shows a compositional bias: basic and acidic residues. Positions 180–262 (RSLCQLQLDQ…SPTVRGDPEC (83 aa)) constitute a Thyroglobulin type-1 domain. 3 disulfides stabilise this stretch: C183/C217, C228/C239, and C241/C262. The short motif at 257 to 259 (RGD) is the Cell attachment site element.

Interacts with igf1 and igf2.

Its subcellular location is the secreted. In terms of biological role, IGF-binding proteins prolong the half-life of the IGFs and have been shown to either inhibit or stimulate the growth promoting effects of the IGFs on cell culture. They alter the interaction of IGFs with their cell surface receptors. In Xenopus laevis (African clawed frog), this protein is Insulin-like growth factor-binding protein 2 (igfbp2).